We begin with the raw amino-acid sequence, 190 residues long: dCTP deaminase (190 aa).

Residue 113-118 (KSTYAR) participates in dCTP binding. The Proton donor/acceptor role is filled by E139. Q158, Y172, K181, and Q182 together coordinate dCTP.

It belongs to the dCTP deaminase family. In terms of assembly, homotrimer.

The enzyme catalyses dCTP + H2O + H(+) = dUTP + NH4(+). It functions in the pathway pyrimidine metabolism; dUMP biosynthesis; dUMP from dCTP (dUTP route): step 1/2. Its function is as follows. Catalyzes the deamination of dCTP to dUTP. The protein is dCTP deaminase of Chlamydia trachomatis serovar A (strain ATCC VR-571B / DSM 19440 / HAR-13).